Here is a 166-residue protein sequence, read N- to C-terminus: Glycine-rich RNA-binding protein GRP1A (166 aa).

The RRM domain occupies 8 to 86 (YRCFVGGLAW…RSITVNEAQS (79 aa)). The disordered stretch occupies residues 68 to 166 (GMNGQDLDGR…YGGSGGGGGW (99 aa)). Gly residues-rich tracts occupy residues 88–146 (GSGG…YGGG) and 153–166 (EGGG…GGGW).

Predominantly expressed in meristematic and growing tissue.

It is found in the nucleus. May play a general role in circadian phenomena associated with meristematic tissue. In Sinapis alba (White mustard), this protein is Glycine-rich RNA-binding protein GRP1A.